A 249-amino-acid chain; its full sequence is 5'-nucleotidase SurE (249 aa).

The a divalent metal cation site is built by Asp9, Asp10, Ser40, and Asn92.

Belongs to the SurE nucleotidase family. Requires a divalent metal cation as cofactor.

It localises to the cytoplasm. It carries out the reaction a ribonucleoside 5'-phosphate + H2O = a ribonucleoside + phosphate. Its function is as follows. Nucleotidase that shows phosphatase activity on nucleoside 5'-monophosphates. The protein is 5'-nucleotidase SurE of Shewanella baltica (strain OS223).